The primary structure comprises 343 residues: Methylthioribose-1-phosphate isomerase (343 aa).

Substrate is bound by residues 44–46 (RGA), R85, and Q192. D233 functions as the Proton donor in the catalytic mechanism. 243–244 (NK) is a binding site for substrate.

The protein belongs to the eIF-2B alpha/beta/delta subunits family. MtnA subfamily.

It catalyses the reaction 5-(methylsulfanyl)-alpha-D-ribose 1-phosphate = 5-(methylsulfanyl)-D-ribulose 1-phosphate. The protein operates within amino-acid biosynthesis; L-methionine biosynthesis via salvage pathway; L-methionine from S-methyl-5-thio-alpha-D-ribose 1-phosphate: step 1/6. Functionally, catalyzes the interconversion of methylthioribose-1-phosphate (MTR-1-P) into methylthioribulose-1-phosphate (MTRu-1-P). In Carboxydothermus hydrogenoformans (strain ATCC BAA-161 / DSM 6008 / Z-2901), this protein is Methylthioribose-1-phosphate isomerase.